Reading from the N-terminus, the 488-residue chain is R3H and coiled-coil domain-containing protein 1 (488 aa).

The R3H domain occupies 16–81 (NDFVHRVQEE…KRRTVICHLD (66 aa)). Disordered stretches follow at residues 87 to 180 (SDGP…GDAE) and 195 to 322 (KSPD…DADH). The segment covering 114–125 (GAAAGPRGAPAG) has biased composition (low complexity). Ser-232 bears the Phosphoserine mark. The stretch at 244 to 321 (SHGMRSLVDQ…EEDEDEADAD (78 aa)) forms a coiled coil. The span at 252-265 (DQEEEEIEGEEEEK) shows a compositional bias: acidic residues. Basic and acidic residues-rich tracts occupy residues 266–280 (VDEK…KERV) and 287–301 (TDAQ…GERM). Residues 302–319 (DEGEDKVDAEEEDEDEAD) show a composition bias toward acidic residues.

This Mus musculus (Mouse) protein is R3H and coiled-coil domain-containing protein 1.